Consider the following 666-residue polypeptide: Putative cysteine-rich receptor-like protein kinase 20 (666 aa).

A signal peptide spans Met-1–Ala-23. The Extracellular portion of the chain corresponds to Gln-24 to Ser-264. Gnk2-homologous domains lie at Phe-27 to Ile-131 and Thr-137 to Phe-241. N-linked (GlcNAc...) asparagine glycans are attached at residues Asn-32, Asn-42, Asn-60, Asn-69, and Asn-103. Asn-262 carries an N-linked (GlcNAc...) asparagine glycan. The chain crosses the membrane as a helical span at residues Val-265 to Phe-285. Residues Ser-286–Arg-666 are Cytoplasmic-facing. The Protein kinase domain occupies Phe-344–Leu-623. Residues Leu-350–Val-358 and Lys-372 contribute to the ATP site. Position 417 is a phosphotyrosine (Tyr-417). Catalysis depends on Asp-469, which acts as the Proton acceptor. Position 509 is a phosphothreonine (Thr-509). Tyr-517 bears the Phosphotyrosine mark.

It belongs to the protein kinase superfamily. Ser/Thr protein kinase family. CRK subfamily.

The protein resides in the membrane. It carries out the reaction L-seryl-[protein] + ATP = O-phospho-L-seryl-[protein] + ADP + H(+). The enzyme catalyses L-threonyl-[protein] + ATP = O-phospho-L-threonyl-[protein] + ADP + H(+). This Arabidopsis thaliana (Mouse-ear cress) protein is Putative cysteine-rich receptor-like protein kinase 20 (CRK20).